The chain runs to 239 residues: Large ribosomal subunit protein uL2 (239 aa).

2 disordered regions span residues 1 to 20 and 203 to 239; these read MGKS…FRSP and PFGG…GRRK. A compositionally biased stretch (basic residues) spans 222–239; it reads PPGRKVGHIAARRTGRRK.

It belongs to the universal ribosomal protein uL2 family. As to quaternary structure, part of the 50S ribosomal subunit. Forms a bridge to the 30S subunit in the 70S ribosome.

Functionally, one of the primary rRNA binding proteins. Required for association of the 30S and 50S subunits to form the 70S ribosome, for tRNA binding and peptide bond formation. It has been suggested to have peptidyltransferase activity; this is somewhat controversial. Makes several contacts with the 16S rRNA in the 70S ribosome. The polypeptide is Large ribosomal subunit protein uL2 (Pyrococcus horikoshii (strain ATCC 700860 / DSM 12428 / JCM 9974 / NBRC 100139 / OT-3)).